A 456-amino-acid polypeptide reads, in one-letter code: Exodeoxyribonuclease 7 large subunit (456 aa).

The protein belongs to the XseA family. As to quaternary structure, heterooligomer composed of large and small subunits.

It is found in the cytoplasm. The catalysed reaction is Exonucleolytic cleavage in either 5'- to 3'- or 3'- to 5'-direction to yield nucleoside 5'-phosphates.. In terms of biological role, bidirectionally degrades single-stranded DNA into large acid-insoluble oligonucleotides, which are then degraded further into small acid-soluble oligonucleotides. This chain is Exodeoxyribonuclease 7 large subunit, found in Escherichia coli (strain SE11).